Reading from the N-terminus, the 582-residue chain is Formate--tetrahydrofolate ligase (582 aa).

65 to 72 serves as a coordination point for ATP; the sequence is TPLGEGKT.

This sequence belongs to the formate--tetrahydrofolate ligase family.

The enzyme catalyses (6S)-5,6,7,8-tetrahydrofolate + formate + ATP = (6R)-10-formyltetrahydrofolate + ADP + phosphate. Its pathway is one-carbon metabolism; tetrahydrofolate interconversion. The chain is Formate--tetrahydrofolate ligase from Vibrio vulnificus (strain CMCP6).